We begin with the raw amino-acid sequence, 400 residues long: NADH-quinone oxidoreductase subunit D (400 aa).

Belongs to the complex I 49 kDa subunit family. As to quaternary structure, NDH-1 is composed of 14 different subunits. Subunits NuoB, C, D, E, F, and G constitute the peripheral sector of the complex.

Its subcellular location is the cell inner membrane. The catalysed reaction is a quinone + NADH + 5 H(+)(in) = a quinol + NAD(+) + 4 H(+)(out). Functionally, NDH-1 shuttles electrons from NADH, via FMN and iron-sulfur (Fe-S) centers, to quinones in the respiratory chain. The immediate electron acceptor for the enzyme in this species is believed to be a menaquinone. Couples the redox reaction to proton translocation (for every two electrons transferred, four hydrogen ions are translocated across the cytoplasmic membrane), and thus conserves the redox energy in a proton gradient. The polypeptide is NADH-quinone oxidoreductase subunit D (Chlorobaculum tepidum (strain ATCC 49652 / DSM 12025 / NBRC 103806 / TLS) (Chlorobium tepidum)).